Consider the following 503-residue polypeptide: Apolipoprotein N-acyltransferase (503 aa).

The next 7 membrane-spanning stretches (helical) occupy residues 13-32, 34-54, 63-83, 102-122, 124-144, 173-193, and 203-223; these read RWRGLVSLFLSVLSGFLTAL, MPGFLSGALIWFSLIPLLYAV, AFLSFVYFFTHVLISFFWVLP, IVVFVLMGIIEAVPFLGFGFL, YFAPQSIVLKTLYLASVYTIF, IVSITGTLGLVFLIVSLNVLF, and LLIFPVIFFVYLLNSSVVHLL. The 230-residue stretch at 231–460 folds into the CN hydrolase domain; the sequence is FKVVALQPNV…RLAGEFHIKA (230 aa). Glu-273 acts as the Proton acceptor in catalysis. Lys-321 is an active-site residue. Cys-371 functions as the Nucleophile in the catalytic mechanism. A helical membrane pass occupies residues 468-488; that stretch reads VRYGDWFFYLSVILAVVSVFI.

It belongs to the CN hydrolase family. Apolipoprotein N-acyltransferase subfamily.

The protein localises to the cell inner membrane. It carries out the reaction N-terminal S-1,2-diacyl-sn-glyceryl-L-cysteinyl-[lipoprotein] + a glycerophospholipid = N-acyl-S-1,2-diacyl-sn-glyceryl-L-cysteinyl-[lipoprotein] + a 2-acyl-sn-glycero-3-phospholipid + H(+). The protein operates within protein modification; lipoprotein biosynthesis (N-acyl transfer). Functionally, catalyzes the phospholipid dependent N-acylation of the N-terminal cysteine of apolipoprotein, the last step in lipoprotein maturation. The polypeptide is Apolipoprotein N-acyltransferase (Thermotoga maritima (strain ATCC 43589 / DSM 3109 / JCM 10099 / NBRC 100826 / MSB8)).